Consider the following 187-residue polypeptide: Aspartic protease inhibitor 9 (187 aa).

N-linked (GlcNAc...) asparagine glycosylation occurs at Asn-19. 2 cysteine pairs are disulfide-bonded: Cys-48–Cys-93 and Cys-142–Cys-158.

This sequence belongs to the protease inhibitor I3 (leguminous Kunitz-type inhibitor) family. Post-translationally, glycosylated. As to expression, tubers.

It localises to the vacuole. Its function is as follows. Inhibitor of cathepsin D (aspartic protease) and trypsin (serine protease). May protect the plant by inhibiting proteases of invading organisms. This is Aspartic protease inhibitor 9 from Solanum tuberosum (Potato).